A 527-amino-acid chain; its full sequence is GMP synthase [glutamine-hydrolyzing] (527 aa).

Residues K4–D202 enclose the Glutamine amidotransferase type-1 domain. Catalysis depends on C81, which acts as the Nucleophile. Active-site residues include H176 and E178. The region spanning W203–R395 is the GMPS ATP-PPase domain. S230–S236 provides a ligand contact to ATP.

Homodimer.

The catalysed reaction is XMP + L-glutamine + ATP + H2O = GMP + L-glutamate + AMP + diphosphate + 2 H(+). The protein operates within purine metabolism; GMP biosynthesis; GMP from XMP (L-Gln route): step 1/1. Functionally, catalyzes the synthesis of GMP from XMP. The protein is GMP synthase [glutamine-hydrolyzing] of Paraburkholderia phytofirmans (strain DSM 17436 / LMG 22146 / PsJN) (Burkholderia phytofirmans).